A 484-amino-acid chain; its full sequence is ATP synthase subunit beta (484 aa).

168 to 175 (GGAGVGKT) lines the ATP pocket.

It belongs to the ATPase alpha/beta chains family. In terms of assembly, F-type ATPases have 2 components, CF(1) - the catalytic core - and CF(0) - the membrane proton channel. CF(1) has five subunits: alpha(3), beta(3), gamma(1), delta(1), epsilon(1). CF(0) has three main subunits: a(1), b(2) and c(9-12). The alpha and beta chains form an alternating ring which encloses part of the gamma chain. CF(1) is attached to CF(0) by a central stalk formed by the gamma and epsilon chains, while a peripheral stalk is formed by the delta and b chains.

It localises to the cell membrane. The catalysed reaction is ATP + H2O + 4 H(+)(in) = ADP + phosphate + 5 H(+)(out). Functionally, produces ATP from ADP in the presence of a proton gradient across the membrane. The catalytic sites are hosted primarily by the beta subunits. The polypeptide is ATP synthase subunit beta (Arthrobacter sp. (strain FB24)).